The sequence spans 139 residues: MKKTALLNAPLSQVIATLGHTDSLTICDAGLPIPKQIERVDLALSAGVPSFLQTFHAVVTEMFVERAIIAEEIKEKNPKILTALLNSLAQLEQQQGNQIEVQYVSHDMFKTYTHASKAIVRSGECSPYANIILYSGVPF.

Catalysis depends on H20, which acts as the Proton donor. Substrate is bound by residues D28, H106, and 128 to 130 (YAN).

Belongs to the RbsD / FucU family. RbsD subfamily. Homodecamer.

The protein localises to the cytoplasm. The enzyme catalyses beta-D-ribopyranose = beta-D-ribofuranose. The protein operates within carbohydrate metabolism; D-ribose degradation; D-ribose 5-phosphate from beta-D-ribopyranose: step 1/2. In terms of biological role, catalyzes the interconversion of beta-pyran and beta-furan forms of D-ribose. This Pasteurella multocida (strain Pm70) protein is D-ribose pyranase.